The chain runs to 133 residues: Small ribosomal subunit protein uS8 (133 aa).

It belongs to the universal ribosomal protein uS8 family. Part of the 30S ribosomal subunit.

In terms of biological role, one of the primary rRNA binding proteins, it binds directly to 16S rRNA central domain where it helps coordinate assembly of the platform of the 30S subunit. This chain is Small ribosomal subunit protein uS8, found in Saccharolobus solfataricus (strain ATCC 35092 / DSM 1617 / JCM 11322 / P2) (Sulfolobus solfataricus).